A 44-amino-acid polypeptide reads, in one-letter code: pyr operon leader peptide (44 aa).

The sequence is that of pyr operon leader peptide (pyrL) from Shigella flexneri.